A 122-amino-acid chain; its full sequence is Large ribosomal subunit protein uL14 (122 aa).

This sequence belongs to the universal ribosomal protein uL14 family. As to quaternary structure, part of the 50S ribosomal subunit. Forms a cluster with proteins L3 and L19. In the 70S ribosome, L14 and L19 interact and together make contacts with the 16S rRNA in bridges B5 and B8.

In terms of biological role, binds to 23S rRNA. Forms part of two intersubunit bridges in the 70S ribosome. This chain is Large ribosomal subunit protein uL14, found in Halothermothrix orenii (strain H 168 / OCM 544 / DSM 9562).